Here is a 500-residue protein sequence, read N- to C-terminus: Cytochrome P450 2D26 (500 aa).

The residue at position 249 (S249) is a Phosphoserine. C446 contributes to the heme binding site.

This sequence belongs to the cytochrome P450 family. Heme is required as a cofactor.

The protein resides in the endoplasmic reticulum membrane. The protein localises to the microsome membrane. The catalysed reaction is an organic molecule + reduced [NADPH--hemoprotein reductase] + O2 = an alcohol + oxidized [NADPH--hemoprotein reductase] + H2O + H(+). Cytochromes P450 are a group of heme-thiolate monooxygenases. In liver microsomes, this enzyme is involved in an NADPH-dependent electron transport pathway. It oxidizes a variety of structurally unrelated compounds, including steroids, fatty acids, and xenobiotics. The polypeptide is Cytochrome P450 2D26 (Cyp2d26) (Rattus norvegicus (Rat)).